The chain runs to 70 residues: Large ribosomal subunit protein uL29 (70 aa).

This sequence belongs to the universal ribosomal protein uL29 family.

The polypeptide is Large ribosomal subunit protein uL29 (Clostridium botulinum (strain ATCC 19397 / Type A)).